Reading from the N-terminus, the 298-residue chain is Transcription factor RHD6 (298 aa).

Disordered regions lie at residues 1–58 (MALV…SDHQ) and 157–213 (TGSR…AKNR). A compositionally biased stretch (low complexity) spans 15–27 (SKQNSSSSEDLSS). Polar residues-rich tracts occupy residues 157–168 (TGSRNESLSPKS) and 177–190 (GESTQPSKKLSSGV). Low complexity predominate over residues 191-205 (TGKTKPKPTTSPKDP). The tract at residues 201 to 214 (SPKDPQSLAAKNRR) is basic motif. Positions 201-250 (SPKDPQSLAAKNRRERISERLKILQELVPNGTKVDLVTMLEKAISYVKFL) constitute a bHLH domain. The helix-loop-helix motif stretch occupies residues 215–250 (ERISERLKILQELVPNGTKVDLVTMLEKAISYVKFL).

Homodimer. Forms heterodimers with RSL1. Interacts with TIFY10B/JAZ2, TIFY6A/JAZ4, TIFY5A/JAZ8, TIFY7/JAZ9 and TIFY9/JAZ10. In terms of tissue distribution, expressed constitutively in flowers. Expressed in root epidermal hair cells.

The protein resides in the nucleus. In terms of biological role, transcription factor that is specifically required for the development of root hairs. Acts with RSL1 to positively regulate root hair development. Acts downstream of genes that regulate epidermal pattern formation, such as GL2. Targets directly RSL4, another transcription factor involved in the regulation of root hair elongation. Acts with RSL1 as transcription factor that integrates a jasmonate (JA) signaling pathway that stimulates root hair growth. This is Transcription factor RHD6 from Arabidopsis thaliana (Mouse-ear cress).